The primary structure comprises 267 residues: 4-hydroxy-tetrahydrodipicolinate reductase (267 aa).

8 to 13 (GANGRM) is a binding site for NAD(+). Arg35 is an NADP(+) binding site. NAD(+) is bound by residues 98–100 (GTT) and 122–125 (AANY). His155 serves as the catalytic Proton donor/acceptor. His156 is a binding site for (S)-2,3,4,5-tetrahydrodipicolinate. Catalysis depends on Lys159, which acts as the Proton donor. Residue 165–166 (GT) coordinates (S)-2,3,4,5-tetrahydrodipicolinate.

Belongs to the DapB family.

The protein resides in the cytoplasm. The enzyme catalyses (S)-2,3,4,5-tetrahydrodipicolinate + NAD(+) + H2O = (2S,4S)-4-hydroxy-2,3,4,5-tetrahydrodipicolinate + NADH + H(+). The catalysed reaction is (S)-2,3,4,5-tetrahydrodipicolinate + NADP(+) + H2O = (2S,4S)-4-hydroxy-2,3,4,5-tetrahydrodipicolinate + NADPH + H(+). The protein operates within amino-acid biosynthesis; L-lysine biosynthesis via DAP pathway; (S)-tetrahydrodipicolinate from L-aspartate: step 4/4. In terms of biological role, catalyzes the conversion of 4-hydroxy-tetrahydrodipicolinate (HTPA) to tetrahydrodipicolinate. The polypeptide is 4-hydroxy-tetrahydrodipicolinate reductase (Pseudoalteromonas atlantica (strain T6c / ATCC BAA-1087)).